The chain runs to 728 residues: FAD-dependent monooxygenase avaB (728 aa).

The chain crosses the membrane as a helical span at residues 17–37 (VIDLLLTFFFYSGLYGLIAAK). The segment covering 50 to 64 (NQQCENTDDVPQSFQ) has biased composition (polar residues). Residues 50–72 (NQQCENTDDVPQSFQRPRDTRST) form a disordered region. Val-168 contributes to the FAD binding site. 490 to 491 (DL) serves as a coordination point for NADP(+).

Belongs to the FAD-binding monooxygenase family. FAD is required as a cofactor.

The protein localises to the membrane. Its pathway is secondary metabolite metabolism. Multifunctional FAD-dependent monooxygenase; part of the cluster that mediates the biosynthesis of a highly modified cyclo-arginine-tryptophan dipeptide (cRW). Within the pathway, avaB uses the avaA cyclo-arginine-tryptophan dipeptide (cRW) as substrate to generate the cyclo-Arg-formylkynurenine diketopiperazine (DKP). AvaB also catalyzes an additional N-oxidation of the avaC product which is followed by cyclization and dehydration. The first step of the pathway is perfornmed by the arginine-containing cyclodipeptide synthase (RCPDS) avaA that acts as the scaffold-generating enzyme and is responsible for formation of the cyclo-Arg-Trp (cRW) diketopiperazine. AvaB then acts as a multifunctional flavoenzyme that is responsible for generating the cyclo-Arg-formylkynurenine DKP, which can be deformylated by avaC. AvaB then further catalyzes an additional N-oxidation followed by cyclization and dehydration. The next step is an N-acetylation of the guanidine group catalyzed by the arginine N-acetyltransferase avaD. The roles of the additional enzymes identified within the ava cluster still have to be determined. This Aspergillus versicolor protein is FAD-dependent monooxygenase avaB.